We begin with the raw amino-acid sequence, 423 residues long: MLDLKYITENIDEVILKLNTRGGDFSHLRQLIDLQEERKSVIKEVEDLKAKRNEYSKEIGELKRQKQDASHVLLKVESIKSDIPALELKLGEIDEKINKELIVLPNIPADDVPVGKDESANIEIKKWGTIRHFDFEVKDHTQLGEALNILDFERATKITGPRFVVDKGLGARLERALINFMIDTHAYTHGYTEIIPPFIVNDKSMYATGQFPKFKEDAFKLEGFDWYLNPTAEVPTINLFRDEIIDNDALPIQYVAYTTAFRSEAGSAGRDTKGILRQHQFNKVELIKFARPEDSEQAHQDMLANSERILQLLNIPYRVVVLSTGDMGFGMSKTYDIEVWLPGQNMYREIGSISNARDFQARRANIRFKRSKDAKTEYVHTLNGSGLAVGRTMIAVLENYQNQDGSITIPEVLKPYMGVEVIK.

231–233 (TAE) contributes to the L-serine binding site. 262–264 (RSE) provides a ligand contact to ATP. Position 285 (Glu285) interacts with L-serine. 349-352 (EIGS) is an ATP binding site. Ser385 is an L-serine binding site.

This sequence belongs to the class-II aminoacyl-tRNA synthetase family. Type-1 seryl-tRNA synthetase subfamily. Homodimer. The tRNA molecule binds across the dimer.

The protein localises to the cytoplasm. It catalyses the reaction tRNA(Ser) + L-serine + ATP = L-seryl-tRNA(Ser) + AMP + diphosphate + H(+). It carries out the reaction tRNA(Sec) + L-serine + ATP = L-seryl-tRNA(Sec) + AMP + diphosphate + H(+). It participates in aminoacyl-tRNA biosynthesis; selenocysteinyl-tRNA(Sec) biosynthesis; L-seryl-tRNA(Sec) from L-serine and tRNA(Sec): step 1/1. Its function is as follows. Catalyzes the attachment of serine to tRNA(Ser). Is also able to aminoacylate tRNA(Sec) with serine, to form the misacylated tRNA L-seryl-tRNA(Sec), which will be further converted into selenocysteinyl-tRNA(Sec). This chain is Serine--tRNA ligase, found in Acholeplasma laidlawii (strain PG-8A).